A 134-amino-acid polypeptide reads, in one-letter code: Putative pre-16S rRNA nuclease (134 aa).

Belongs to the YqgF nuclease family.

Its subcellular location is the cytoplasm. Functionally, could be a nuclease involved in processing of the 5'-end of pre-16S rRNA. In Helicobacter pylori (strain HPAG1), this protein is Putative pre-16S rRNA nuclease.